A 378-amino-acid polypeptide reads, in one-letter code: Ribosomal RNA large subunit methyltransferase G (378 aa).

This sequence belongs to the methyltransferase superfamily. RlmG family.

It localises to the cytoplasm. It carries out the reaction guanosine(1835) in 23S rRNA + S-adenosyl-L-methionine = N(2)-methylguanosine(1835) in 23S rRNA + S-adenosyl-L-homocysteine + H(+). In terms of biological role, specifically methylates the guanine in position 1835 (m2G1835) of 23S rRNA. This chain is Ribosomal RNA large subunit methyltransferase G, found in Enterobacter sp. (strain 638).